A 476-amino-acid polypeptide reads, in one-letter code: MPSNQEARLFLAVLVLAQVLPILVDSAAEKGFKQAFWQPLCQVSEELDDQPKGALFTLQAAASKIQKMRDAALRASIYAEINHGTNRAKAAVIVANHYAMKADSGLEALKQTLSSQEVTATATASYLKGRIDEYLNLLLQTKESGTSGCMMDTSGTNTVTKAGGTIGGVPCKLQLSPIQPKRPAATYLGKAGYVGLTRQADAANNFHDNDAECRLASGHNTNGLGKSGQLSAAVTMAAGYVTVANSQTAVTVQALDALQEASGAAHQPWIDAWKAKKALTGAETAEFRNETAGIAGKTGVTKLVEEALLKKKDSEASEIQTELKKYFSGHENEQWTAIEKLISEQPVAQNLVGDNQPTKLGELEGNAKLTTILAYYRMETAGKFEVLTQKHKPAESQQQAAETEGSCNKKDQNECKSPCKWHNDAENKKCTLDKEEAKKVADETAKDGKTGNTNTTGSSNSFVISKTPLWLAVLLF.

The signal sequence occupies residues 1-26; sequence MPSNQEARLFLAVLVLAQVLPILVDS. 2 disulfides stabilise this stretch: C41/C171 and C149/C213. N289 carries N-linked (GlcNAc...) asparagine glycosylation. 2 disordered regions span residues 389-418 and 435-459; these read QKHK…CKSP and EEAK…TGSS. Disulfide bonds link C407/C419 and C415/C430. Residues 435–449 are compositionally biased toward basic and acidic residues; the sequence is EEAKKVADETAKDGK. Residues 450–459 show a composition bias toward low complexity; that stretch reads TGNTNTTGSS. N454 carries N-linked (GlcNAc...) asparagine glycosylation. S459 is lipidated: GPI-anchor amidated serine. A propeptide spans 460 to 476 (removed in mature form); that stretch reads NSFVISKTPLWLAVLLF.

As to quaternary structure, homodimer.

It is found in the cell membrane. VSG forms a coat on the surface of the parasite. The trypanosome evades the immune response of the host by expressing a series of antigenically distinct VSGs from an estimated 1000 VSG genes. This Trypanosoma brucei brucei protein is Variant surface glycoprotein MITAT 1.2.